Here is a 132-residue protein sequence, read N- to C-terminus: Agouti-signaling protein (132 aa).

Residues 1-22 form the signal peptide; that stretch reads MDVTRLLLATLLVFLCFFTAYS. N-linked (GlcNAc...) asparagine glycosylation occurs at asparagine 39. The interval 61-87 is disordered; sequence QISRKEAEKKRSSKKEASMKKVARPRT. Basic and acidic residues predominate over residues 63–79; that stretch reads SRKEAEKKRSSKKEASM. 5 cysteine pairs are disulfide-bonded: cysteine 93/cysteine 108, cysteine 100/cysteine 114, cysteine 107/cysteine 125, cysteine 111/cysteine 132, and cysteine 116/cysteine 123. In terms of domain architecture, Agouti spans 93–132; it reads CVATRDSCKPPAPACCDPCASCQCRFFRSACSCRVLSLNC.

The protein resides in the secreted. Involved in the regulation of melanogenesis. The binding of ASP to MC1R precludes alpha-MSH initiated signaling and thus blocks production of cAMP, leading to a down-regulation of eumelanogenesis (brown/black pigment) and thus increasing synthesis of pheomelanin (yellow/red pigment). In Macaca maura (Moor macaque), this protein is Agouti-signaling protein (ASIP).